We begin with the raw amino-acid sequence, 275 residues long: 4-diphosphocytidyl-2-C-methyl-D-erythritol kinase (275 aa).

K14 is an active-site residue. 98–108 (PMGAGLGGGSS) contributes to the ATP binding site. D140 is a catalytic residue.

Belongs to the GHMP kinase family. IspE subfamily.

The catalysed reaction is 4-CDP-2-C-methyl-D-erythritol + ATP = 4-CDP-2-C-methyl-D-erythritol 2-phosphate + ADP + H(+). The protein operates within isoprenoid biosynthesis; isopentenyl diphosphate biosynthesis via DXP pathway; isopentenyl diphosphate from 1-deoxy-D-xylulose 5-phosphate: step 3/6. Its function is as follows. Catalyzes the phosphorylation of the position 2 hydroxy group of 4-diphosphocytidyl-2C-methyl-D-erythritol. In Francisella tularensis subsp. tularensis (strain WY96-3418), this protein is 4-diphosphocytidyl-2-C-methyl-D-erythritol kinase.